Reading from the N-terminus, the 346-residue chain is NADH-quinone oxidoreductase subunit H 2 (346 aa).

Transmembrane regions (helical) follow at residues 14–34, 83–103, 136–156, 172–192, 208–228, 260–280, 289–309, and 324–344; these read IAMVLKVLVVFVFVLLTVAYA, FAFLIAPLIALVPAFIGFAVI, VGVLYILALASIGVYGIVLAG, SAQMISYELAAGLAIISVFML, GAWYAFKQPLAFILFFICSIA, FFMAEYANMVTVCAVTTTLFL, LPGWFWFIAKVYFLIFTCMWI, and LGWKVFLPLTLINIVVTGIIV.

It belongs to the complex I subunit 1 family. As to quaternary structure, NDH-1 is composed of 14 different subunits. Subunits NuoA, H, J, K, L, M, N constitute the membrane sector of the complex.

The protein resides in the cell inner membrane. It carries out the reaction a quinone + NADH + 5 H(+)(in) = a quinol + NAD(+) + 4 H(+)(out). Its function is as follows. NDH-1 shuttles electrons from NADH, via FMN and iron-sulfur (Fe-S) centers, to quinones in the respiratory chain. The immediate electron acceptor for the enzyme in this species is believed to be ubiquinone. Couples the redox reaction to proton translocation (for every two electrons transferred, four hydrogen ions are translocated across the cytoplasmic membrane), and thus conserves the redox energy in a proton gradient. This subunit may bind ubiquinone. This chain is NADH-quinone oxidoreductase subunit H 2, found in Geobacter metallireducens (strain ATCC 53774 / DSM 7210 / GS-15).